We begin with the raw amino-acid sequence, 154 residues long: PTS system fructose-specific EIIA component (154 aa).

Residues 8-152 (TITPLELISL…QTVQDVLAEV (145 aa)) enclose the PTS EIIA type-2 domain. The active-site Tele-phosphohistidine intermediate is histidine 70. At histidine 70 the chain carries Phosphohistidine; by HPr.

It is found in the cytoplasm. Functionally, the phosphoenolpyruvate-dependent sugar phosphotransferase system (sugar PTS), a major carbohydrate active transport system, catalyzes the phosphorylation of incoming sugar substrates concomitantly with their translocation across the cell membrane. The enzyme II PtfABC PTS system is involved in fructose transport. The protein is PTS system fructose-specific EIIA component of Haloferax volcanii (strain ATCC 29605 / DSM 3757 / JCM 8879 / NBRC 14742 / NCIMB 2012 / VKM B-1768 / DS2) (Halobacterium volcanii).